The following is a 400-amino-acid chain: Probable peptidoglycan glycosyltransferase FtsW (400 aa).

A run of 11 helical transmembrane segments spans residues 30-50, 65-84, 92-112, 123-143, 157-177, 179-199, 201-221, 247-267, 280-300, 321-341, and 356-376; these read LSVL…SIGI, QAAY…RIRL, GLLL…GVGV, LGLF…LYLA, FAGF…LLME, DFGA…LAGA, LWQF…LAIT, TQSL…GASV, FLFA…VVLL, LFGA…AFIN, and LPLM…VGLL.

It belongs to the SEDS family. FtsW subfamily.

It is found in the cell inner membrane. It catalyses the reaction [GlcNAc-(1-&gt;4)-Mur2Ac(oyl-L-Ala-gamma-D-Glu-L-Lys-D-Ala-D-Ala)](n)-di-trans,octa-cis-undecaprenyl diphosphate + beta-D-GlcNAc-(1-&gt;4)-Mur2Ac(oyl-L-Ala-gamma-D-Glu-L-Lys-D-Ala-D-Ala)-di-trans,octa-cis-undecaprenyl diphosphate = [GlcNAc-(1-&gt;4)-Mur2Ac(oyl-L-Ala-gamma-D-Glu-L-Lys-D-Ala-D-Ala)](n+1)-di-trans,octa-cis-undecaprenyl diphosphate + di-trans,octa-cis-undecaprenyl diphosphate + H(+). Its pathway is cell wall biogenesis; peptidoglycan biosynthesis. Peptidoglycan polymerase that is essential for cell division. The polypeptide is Probable peptidoglycan glycosyltransferase FtsW (Thioalkalivibrio sulfidiphilus (strain HL-EbGR7)).